Reading from the N-terminus, the 758-residue chain is Transcription activator MSS11 (758 aa).

The disordered stretch occupies residues 1-23 (MDNTTNINTNERSSNTDFSSAPN). The LisH domain occupies 51-83 (SKQLLYAHIYNYLIKNNYWNSAAKFLSEADLPL). Disordered stretches follow at residues 191 to 220 (TQNS…TNRN), 268 to 299 (LQSP…QQQQ), 322 to 355 (QQHQ…GLMP), 428 to 454 (GNQN…NANG), and 587 to 681 (KTNT…TKES). The segment covering 207–220 (DGSNFNLNDPTNRN) has biased composition (polar residues). Residues 269-299 (QSPAQPQQSSQQQIQQPQHQPQHQPQQQQQQ) are compositionally biased toward low complexity. Composition is skewed to polar residues over residues 345-355 (SENSHSTGLMP), 436-454 (TRNN…NANG), and 587-600 (KTNT…STSV). Low complexity predominate over residues 605 to 664 (NNNNNNNNNNNNNNNNNSNNSNNNNNNNNNNNNSNNTPTVSQPSSKCTSSSSTTPNITTT). Residues 667–676 (PKRKQRVGKT) are compositionally biased toward basic residues.

It belongs to the MSS11 family. As to quaternary structure, interacts with FLO8, STE12 and TEC1.

It is found in the cytoplasm. Its subcellular location is the nucleus. Transcription factor that regulates pseudohyphal differentiation, invasive growth, floculation, adhesion and starch metabolism in response to nutrient availability. The protein is Transcription activator MSS11 (MSS11) of Saccharomyces cerevisiae (strain ATCC 204508 / S288c) (Baker's yeast).